Reading from the N-terminus, the 547-residue chain is Chaperonin GroEL (547 aa).

ATP contacts are provided by residues 30–33, lysine 51, 87–91, glycine 415, 480–482, and aspartate 496; these read TLGP, DGTTT, and NAA.

Belongs to the chaperonin (HSP60) family. In terms of assembly, forms a cylinder of 14 subunits composed of two heptameric rings stacked back-to-back. Interacts with the co-chaperonin GroES.

The protein resides in the cytoplasm. It catalyses the reaction ATP + H2O + a folded polypeptide = ADP + phosphate + an unfolded polypeptide.. In terms of biological role, together with its co-chaperonin GroES, plays an essential role in assisting protein folding. The GroEL-GroES system forms a nano-cage that allows encapsulation of the non-native substrate proteins and provides a physical environment optimized to promote and accelerate protein folding. This chain is Chaperonin GroEL, found in Glaesserella parasuis serovar 5 (strain SH0165) (Haemophilus parasuis).